Reading from the N-terminus, the 171-residue chain is Large ribosomal subunit protein uL24 (171 aa).

A large ribosomal subunit protein uL24 region spans residues 1 to 124; it reads MNIKTGDTVV…AKPAKTKAEK (124 aa). The disordered stretch occupies residues 108–171; it reads GQTLDKAAKP…SVQKKGASGK (64 aa). Residues 125–171 form a unknown region; it reads VEKAATSSTDKPAKVTKAAKEAKPVKAVKSQKVEKNTSVQKKGASGK.

Belongs to the universal ribosomal protein uL24 family. Part of the 50S ribosomal subunit.

In terms of biological role, one of two assembly initiator proteins, it binds directly to the 5'-end of the 23S rRNA, where it nucleates assembly of the 50S subunit. One of the proteins that surrounds the polypeptide exit tunnel on the outside of the subunit. This is Large ribosomal subunit protein uL24 from Acholeplasma laidlawii (strain PG-8A).